Consider the following 200-residue polypeptide: MSKYAGIVLAGGMSSRFGEPKALASWQGSTFIEHILKVMTSTLQEVVVISHSDIKEPVEKLVQVPVIEDIPHYKGNGPLAGIVSGMEYIEADWYAIMPCDAPNVSHEWFTILLGQTSNEYDAVVPIINGRKQPLLAAYHNRVKEKIYALLQEEKRSMVQLLSQCNVKYIAGEDVQANADWFINVNTKEEYVQAQKDLSNE.

GTP-binding positions include 9 to 11 (LAG), Lys-21, Asp-69, and Asp-100. Asp-100 is a Mg(2+) binding site.

Belongs to the MobA family. The cofactor is Mg(2+).

It is found in the cytoplasm. The catalysed reaction is Mo-molybdopterin + GTP + H(+) = Mo-molybdopterin guanine dinucleotide + diphosphate. In terms of biological role, transfers a GMP moiety from GTP to Mo-molybdopterin (Mo-MPT) cofactor (Moco or molybdenum cofactor) to form Mo-molybdopterin guanine dinucleotide (Mo-MGD) cofactor. The chain is Probable molybdenum cofactor guanylyltransferase from Bacillus cereus (strain ZK / E33L).